We begin with the raw amino-acid sequence, 256 residues long: 6-carboxyhexanoate--CoA ligase (256 aa).

It belongs to the BioW family. As to quaternary structure, homodimer. It depends on Mg(2+) as a cofactor.

It carries out the reaction heptanedioate + ATP + CoA = 6-carboxyhexanoyl-CoA + AMP + diphosphate. Its pathway is metabolic intermediate metabolism; pimeloyl-CoA biosynthesis; pimeloyl-CoA from pimelate: step 1/1. Its function is as follows. Catalyzes the transformation of pimelate into pimeloyl-CoA with concomitant hydrolysis of ATP to AMP. In Bacillus amyloliquefaciens (strain ATCC 23350 / DSM 7 / BCRC 11601 / CCUG 28519 / NBRC 15535 / NRRL B-14393 / F), this protein is 6-carboxyhexanoate--CoA ligase.